A 530-amino-acid polypeptide reads, in one-letter code: Glucose-6-phosphate isomerase (530 aa).

Glutamate 322 (proton donor) is an active-site residue. Residues histidine 351 and lysine 455 contribute to the active site.

This sequence belongs to the GPI family.

It localises to the cytoplasm. It carries out the reaction alpha-D-glucose 6-phosphate = beta-D-fructose 6-phosphate. It functions in the pathway carbohydrate biosynthesis; gluconeogenesis. Its pathway is carbohydrate degradation; glycolysis; D-glyceraldehyde 3-phosphate and glycerone phosphate from D-glucose: step 2/4. Functionally, catalyzes the reversible isomerization of glucose-6-phosphate to fructose-6-phosphate. The polypeptide is Glucose-6-phosphate isomerase (Citrifermentans bemidjiense (strain ATCC BAA-1014 / DSM 16622 / JCM 12645 / Bem) (Geobacter bemidjiensis)).